A 347-amino-acid polypeptide reads, in one-letter code: NADH-ubiquinone oxidoreductase chain 2 (347 aa).

The next 11 membrane-spanning stretches (helical) occupy residues 1 to 21 (MNPLVTLIIYITLISGTIITM), 25 to 45 (HWLTVWMGLEMNMFAIIPLIM), 59 to 79 (YFLIQASASMLLLMAATINFM), 96 to 116 (TIILAAIMMKLGMAPFHFWVP), 123 to 143 (LLSTSLIILTWQKLAPLSILY), 153 to 173 (IILASAMLSIMIGGWGGLNQT), 178 to 198 (IMAYSSIAHMGWMSAILIYNP), 200 to 220 (LMLLNLTLYIIFTITMFTILI), 239 to 259 (ILMMTLLLTLLSMGGLPPLSG), 278 to 298 (ISLTMAMLALLNLYFYMRLIY), and 325 to 345 (FLPTLTIISILMLPITPMMFI).

This sequence belongs to the complex I subunit 2 family. Core subunit of respiratory chain NADH dehydrogenase (Complex I) which is composed of 45 different subunits. Interacts with TMEM242.

The protein resides in the mitochondrion inner membrane. The catalysed reaction is a ubiquinone + NADH + 5 H(+)(in) = a ubiquinol + NAD(+) + 4 H(+)(out). Functionally, core subunit of the mitochondrial membrane respiratory chain NADH dehydrogenase (Complex I) that is believed to belong to the minimal assembly required for catalysis. Complex I functions in the transfer of electrons from NADH to the respiratory chain. The immediate electron acceptor for the enzyme is believed to be ubiquinone. In Oryzorictes hova (Hova rice tenrec), this protein is NADH-ubiquinone oxidoreductase chain 2.